Consider the following 307-residue polypeptide: MASRDFLGGFGRDGGQAPVGGAGAAPGPGGESDEIELSLGLSLGGCFGAEPSQEGRSADPRLQRSSSVASICSLPAATTGTSCGAQDAGPGPAAAPPPDLLRTSSLPAEYMEDRLRRRAMQSQRRLEAKRKRLERRNSMSSGRPVPAAGGRDDGLEHTVPSGFQLRRSVALTTAGSPTPSRPQQGPADRRAAEATGPDGAACHDEPQPLPLRLRTLRSLTMRTASTGDLRSAMAEDMPMVSYKAEGPGGRKTDGFLYKYRKGEEVRIVCVCHGSFLTPAEFVEHAGGGEVPNPLRHIVVNPQQSVFL.

2 disordered regions span residues Met1–Val159 and Thr173–Pro208. Residues Gly8–Gly30 show a composition bias toward gly residues. 2 stretches are compositionally biased toward polar residues: residues Gln63–Cys83 and Thr173–Gln183.

The protein belongs to the Ninja family.

The protein resides in the nucleus. In Zea mays (Maize), this protein is Ninja-family protein 5.